A 259-amino-acid chain; its full sequence is Protein CWC15 homolog (259 aa).

The disordered stretch occupies residues 1–182 (MTTAARPTFD…EKKQEDERIR (182 aa)). The segment covering 52–71 (DENRNRDFRKELEEREREAR) has biased composition (basic and acidic residues). Low complexity-rich tracts occupy residues 72-82 (SGTGATSSSSG) and 114-126 (QQQA…QQAA). The segment covering 129-150 (DADEPLDNDSSDSDSDSDDDDA) has biased composition (acidic residues). A coiled-coil region spans residues 150–182 (AALLAELQKIKQERLQETARRESEKKQEDERIR). Over residues 157-182 (QKIKQERLQETARRESEKKQEDERIR) the composition is skewed to basic and acidic residues.

This sequence belongs to the CWC15 family.

Functionally, involved in pre-mRNA splicing. This chain is Protein CWC15 homolog (c12.1), found in Drosophila melanogaster (Fruit fly).